Reading from the N-terminus, the 529-residue chain is MRGAMKPSIVHCLKLLMLLALGGVTMHVPDEDDVVASLGALRLDGHFSFDDAHAAARDFGNRCSLLPAAVLHPGSVSDVAATVRRVFQLGRSSPLTVAARGHGHSLLGQSQAAGGIVVKMESLAAAAARAVRVHGGASPHVDAPGGELWINVLHETLKHGLAPRSWTDYLHLTVGGTLSNAGVSGQAFRHGPQVSNVNQLEIVTGRGEVVTCSHEVNSDLFYAALGGLGQFGIITRARIALEPAPKMVRWIRVLYSDFETFTEDQEKLIASEKTFDYIEGFVIINRTGILNNWRTSFKPQDPVQASQFQSDGRVLYCLELTMNFNHDEADIMEQEVGALLSRLRYISSTLFYTDVTYLEFLDRVHTSELKLRAQGLWEVPHPWLNLLIPRSTVHKFAKEVFGKILKDSNNGPILLYPVNRTKWDNRTSVVIPDEEIFYLVGFLSSAPSSSGHGSVEHAMNLNNKIVDFCEKNGVGMKQYLAPYTTQKQWKAHFGARWETFERRKHTYDPLAILAPGQRIFPKASLPMSL.

Positions 1-27 (MRGAMKPSIVHCLKLLMLLALGGVTMH) are cleaved as a signal peptide. Residues 63–244 (CSLLPAAVLH…TRARIALEPA (182 aa)) form the FAD-binding PCMH-type domain. Ala-99, Gly-101, and Gly-103 together coordinate FAD. His-104 bears the Pros-8alpha-FAD histidine mark. Residues Ser-105, Gln-109, Asp-168, Thr-173, Ser-179, Val-183, and Ile-234 each coordinate FAD. Asn-285, Asn-419, and Asn-425 each carry an N-linked (GlcNAc...) asparagine glycan. Residues Tyr-479 and Gln-517 each coordinate FAD.

Belongs to the oxygen-dependent FAD-linked oxidoreductase family. Monomer. It depends on FAD as a cofactor. Expressed in inflorescence meristems.

It is found in the secreted. The protein localises to the extracellular space. The enzyme catalyses N(6)-dimethylallyladenine + A + H2O = 3-methyl-2-butenal + adenine + AH2. Catalyzes the oxidation of cytokinins, a family of N(6)-substituted adenine derivatives that are plant hormones, where the substituent is an isopentenyl group. The polypeptide is Cytokinin dehydrogenase 4 (CKX4) (Oryza sativa subsp. japonica (Rice)).